A 69-amino-acid chain; its full sequence is Small ribosomal subunit protein uS7 (69 aa).

The protein belongs to the universal ribosomal protein uS7 family. As to quaternary structure, part of the 30S ribosomal subunit.

One of the primary rRNA binding proteins, it binds directly to 16S rRNA where it nucleates assembly of the head domain of the 30S subunit. Is located at the subunit interface close to the decoding center. This is Small ribosomal subunit protein uS7 (rps7) from Methanococcoides methylutens.